The sequence spans 194 residues: A-type ATP synthase subunit E (194 aa).

It belongs to the V-ATPase E subunit family. Has multiple subunits with at least A(3), B(3), C, D, E, F, H, I and proteolipid K(x).

It is found in the cell membrane. Its function is as follows. Component of the A-type ATP synthase that produces ATP from ADP in the presence of a proton gradient across the membrane. The polypeptide is A-type ATP synthase subunit E (Saccharolobus solfataricus (strain ATCC 35092 / DSM 1617 / JCM 11322 / P2) (Sulfolobus solfataricus)).